The chain runs to 1110 residues: cGMP-specific 3',5'-cyclic phosphodiesterase (1110 aa).

Composition is skewed to low complexity over residues 1–25 and 35–55; these read MTDV…SSAS and TSTA…ASGA. Disordered stretches follow at residues 1–55, 67–128, and 184–203; these read MTDV…ASGA, ISNQ…QQDV, and ASPT…SASS. Residues 88–103 are compositionally biased toward pro residues; that stretch reads APYPPVPAAKPKPTPT. The segment covering 192–203 has biased composition (low complexity); sequence SPRSLSNSSASS. GAF domains are found at residues 233-385 and 417-601; these read DIDV…GIGI and NLEC…GLGI. The region spanning 631-954 is the PDEase domain; sequence SQDQTEKLTQ…RNWQDLAEKV (324 aa). Histidine 707 serves as the catalytic Proton donor. A divalent metal cation is bound by residues histidine 711, histidine 747, aspartate 748, and aspartate 858. Disordered stretches follow at residues 997–1028 and 1040–1110; these read AQHG…TGAL and LYNS…CSLL. Composition is skewed to basic and acidic residues over residues 1006–1015 and 1056–1068; these read DDSHTPEHQR and LESH…DDKS. Residues 1082–1097 are compositionally biased toward low complexity; that stretch reads GRMSASSSTSSAGTVV. Over residues 1100–1110 the composition is skewed to basic residues; that stretch reads SKKRSKLCSLL. Residue cysteine 1107 is modified to Cysteine methyl ester. Cysteine 1107 carries the S-farnesyl cysteine lipid modification. Positions 1108–1110 are cleaved as a propeptide — removed in mature form; that stretch reads SLL.

Belongs to the cyclic nucleotide phosphodiesterase family. Interacts with PrBP. The cofactor is a divalent metal cation.

The protein localises to the cell membrane. The enzyme catalyses 3',5'-cyclic GMP + H2O = GMP + H(+). Has a role regulating cGMP transport in Malpighian tubule principal cells. The sequence is that of cGMP-specific 3',5'-cyclic phosphodiesterase from Drosophila pseudoobscura pseudoobscura (Fruit fly).